The sequence spans 158 residues: Eukaryotic translation initiation factor 5A-1 (158 aa).

The span at 1–10 shows a compositional bias: basic and acidic residues; it reads MSDEEHHFES. The disordered stretch occupies residues 1-21; sequence MSDEEHHFESSDAGASKTYPQ. Ser-2 is subject to Phosphoserine. A Hypusine modification is found at Lys-51.

Belongs to the eIF-5A family. In terms of processing, lys-51 undergoes hypusination, a unique post-translational modification that consists in the addition of a butylamino group from spermidine to lysine side chain, leading to the formation of the unusual amino acid hypusine. eIF-5As are the only known proteins to undergo this modification, which is essential for their function. In terms of tissue distribution, expressed in leaf vasculature and inflorescence stems. Present in xylem tissue but not in phloem, and in developing vessel members, but not in mature vessels members. Detected in anthers.

Functionally, translation factor that promotes translation elongation and termination, particularly upon ribosome stalling at specific amino acid sequence contexts. Binds between the exit (E) and peptidyl (P) site of the ribosome and promotes rescue of stalled ribosome: specifically required for efficient translation of polyproline-containing peptides as well as other motifs that stall the ribosome. Acts as a ribosome quality control (RQC) cofactor by joining the RQC complex to facilitate peptidyl transfer during CAT tailing step. Involved in xylogenesis. This chain is Eukaryotic translation initiation factor 5A-1 (ELF5A-1), found in Arabidopsis thaliana (Mouse-ear cress).